The sequence spans 420 residues: Serine hydroxymethyltransferase (420 aa).

Residues Leu123 and 127–129 (GHL) each bind (6S)-5,6,7,8-tetrahydrofolate. N6-(pyridoxal phosphate)lysine is present on Lys232. 357-359 (SPF) lines the (6S)-5,6,7,8-tetrahydrofolate pocket.

This sequence belongs to the SHMT family. Homodimer. Pyridoxal 5'-phosphate is required as a cofactor.

The protein resides in the cytoplasm. The catalysed reaction is (6R)-5,10-methylene-5,6,7,8-tetrahydrofolate + glycine + H2O = (6S)-5,6,7,8-tetrahydrofolate + L-serine. Its pathway is one-carbon metabolism; tetrahydrofolate interconversion. The protein operates within amino-acid biosynthesis; glycine biosynthesis; glycine from L-serine: step 1/1. In terms of biological role, catalyzes the reversible interconversion of serine and glycine with tetrahydrofolate (THF) serving as the one-carbon carrier. This reaction serves as the major source of one-carbon groups required for the biosynthesis of purines, thymidylate, methionine, and other important biomolecules. Also exhibits THF-independent aldolase activity toward beta-hydroxyamino acids, producing glycine and aldehydes, via a retro-aldol mechanism. This chain is Serine hydroxymethyltransferase, found in Streptococcus pyogenes serotype M12 (strain MGAS2096).